The primary structure comprises 415 residues: Serine hydroxymethyltransferase 3 (415 aa).

(6S)-5,6,7,8-tetrahydrofolate contacts are provided by residues Leu122 and 126-128; that span reads GHL. Lys230 carries the post-translational modification N6-(pyridoxal phosphate)lysine.

Belongs to the SHMT family. In terms of assembly, homodimer. Pyridoxal 5'-phosphate is required as a cofactor.

It localises to the cytoplasm. It carries out the reaction (6R)-5,10-methylene-5,6,7,8-tetrahydrofolate + glycine + H2O = (6S)-5,6,7,8-tetrahydrofolate + L-serine. The protein operates within one-carbon metabolism; tetrahydrofolate interconversion. Its pathway is amino-acid biosynthesis; glycine biosynthesis; glycine from L-serine: step 1/1. Its function is as follows. Catalyzes the reversible interconversion of serine and glycine with tetrahydrofolate (THF) serving as the one-carbon carrier. This reaction serves as the major source of one-carbon groups required for the biosynthesis of purines, thymidylate, methionine, and other important biomolecules. Also exhibits THF-independent aldolase activity toward beta-hydroxyamino acids, producing glycine and aldehydes, via a retro-aldol mechanism. In Burkholderia lata (strain ATCC 17760 / DSM 23089 / LMG 22485 / NCIMB 9086 / R18194 / 383), this protein is Serine hydroxymethyltransferase 3.